Consider the following 225-residue polypeptide: Agamous-like MADS-box protein MADS1 (225 aa).

Expressed in flowers and seeds.

It is found in the nucleus. In terms of biological role, probable transcription factor involved in flower development. This is Agamous-like MADS-box protein MADS1 from Vitis vinifera (Grape).